The primary structure comprises 396 residues: G-protein coupled receptor 84 (396 aa).

Residues 1–26 are Extracellular-facing; it reads MWNSSDANFSCYHESVLGYRYVAVSW. Asn3 and Asn8 each carry an N-linked (GlcNAc...) asparagine glycan. A helical membrane pass occupies residues 27 to 47; it reads GVVVAVTGTVGNVLTLLALAI. Residues 48–57 lie on the Cytoplasmic side of the membrane; the sequence is QPKLRTRFNL. The chain crosses the membrane as a helical span at residues 58 to 78; sequence LIANLTLADLLYCTLLQPFSV. Topologically, residues 79-94 are extracellular; the sequence is DTYLHLHWRTGATFCR. Residues 95–115 traverse the membrane as a helical segment; the sequence is VFGLLLFASNSVSILTLCLIA. Over 116-144 the chain is Cytoplasmic; the sequence is LGRYLLIAHPKLFPQVFSAKGIVLALVST. A helical transmembrane segment spans residues 145 to 165; the sequence is WVVGVASFAPLWPIYILVPVV. Over 166-180 the chain is Extracellular; it reads CTCSFDRIRGRPYTT. Residues 181–201 traverse the membrane as a helical segment; the sequence is ILMGIYFVLGLSSVGIFYCLI. Over 202–320 the chain is Cytoplasmic; it reads HRQVKRAAQA…SSEFGKVTRM (119 aa). Phosphoserine occurs at positions 221 and 224. Residues 244–311 form a disordered region; it reads RLASGGPSEG…KGARRAPDSS (68 aa). Residues 247 to 260 show a composition bias toward low complexity; that stretch reads SGGPSEGISSEPVS. Residues Thr263 and Thr264 each carry the phosphothreonine modification. A helical transmembrane segment spans residues 321 to 341; the sequence is CFAVFLCFALSYIPFLLLNIL. The Extracellular segment spans residues 342–352; it reads DARVQAPRVVH. A helical transmembrane segment spans residues 353-373; sequence MLAANLTWLNGCINPVLYAAM. The Cytoplasmic portion of the chain corresponds to 374–396; it reads NRQFRQAYGSILKRGPRSFHRLH.

It belongs to the G-protein coupled receptor 1 family. As to quaternary structure, interacts with ARRB2 and ARR3. In terms of processing, phosphorylated by a subset of GPR84-activating ligands. Constitutively phosphorylated at Ser-221 and Ser-224 in the absence of 2-HTP. By contrast, Thr-263 and Thr-264 are phosphorylated only following prior cell treatment with 2-HTP. As to expression, expressed predominantly in hematopoietic tissues. High levels detected in the bone marrow and lower levels in the peripheral leukocytes and lung. Also expressed in brain, heart, muscle, colon, thymus, spleen, kidney, liver, placenta and intestine. Within the leukocyte population expression is higher in neutrophils and eosinophils relative to T- or B-lymphocytes.

The protein resides in the cell membrane. Functionally, g protein-coupled receptor that responds endogenously to dietary fatty acids or nutrient, specifically medium-chain free fatty acid (FFA) with carbon chain lengths of C9 to C14. Capric acid (C10:0), undecanoic acid (C11:0) and lauric acid (C12:0) are the most potent agonists. In immune cells, functions as a pro-inflammatory receptor via 6-OAU and promotes the expression of pro-inflammatory mediators such as TNFalpha, IL-6 and IL-12B as well as stimulating chemotactic responses through activation of signaling mediators AKT, ERK and NF-kappa-B. In addition, triggers increased bacterial adhesion and phagocytosis in macrophages and regulates pro-inflammatory function via enhancing NLRP3 inflammasome activation. Also plays an important role in inflammation by modulating neutrophil functions. Mechanistically, promotes neutrophil chemotaxis, reactive oxygen species (ROS) production and degranulation via LYN-AKT/ERK pathway. To regulate ROS, communicates with the two formyl peptide receptors FPR2 and FPR1 to control the NADPH oxidase activity in neutrophils. The polypeptide is G-protein coupled receptor 84 (GPR84) (Homo sapiens (Human)).